The primary structure comprises 357 residues: Phosphoribosylformylglycinamidine cyclo-ligase (357 aa).

Belongs to the AIR synthase family.

The protein resides in the cytoplasm. It carries out the reaction 2-formamido-N(1)-(5-O-phospho-beta-D-ribosyl)acetamidine + ATP = 5-amino-1-(5-phospho-beta-D-ribosyl)imidazole + ADP + phosphate + H(+). Its pathway is purine metabolism; IMP biosynthesis via de novo pathway; 5-amino-1-(5-phospho-D-ribosyl)imidazole from N(2)-formyl-N(1)-(5-phospho-D-ribosyl)glycinamide: step 2/2. This chain is Phosphoribosylformylglycinamidine cyclo-ligase, found in Rhizobium etli (strain CIAT 652).